Reading from the N-terminus, the 327-residue chain is Ferrochelatase (327 aa).

Fe cation contacts are provided by histidine 187 and glutamate 265.

Belongs to the ferrochelatase family.

Its subcellular location is the cytoplasm. It catalyses the reaction heme b + 2 H(+) = protoporphyrin IX + Fe(2+). The protein operates within porphyrin-containing compound metabolism; protoheme biosynthesis; protoheme from protoporphyrin-IX: step 1/1. Catalyzes the ferrous insertion into protoporphyrin IX. The protein is Ferrochelatase of Chlamydia pneumoniae (Chlamydophila pneumoniae).